The following is a 118-amino-acid chain: Basic phospholipase A2 nigexine (118 aa).

Cystine bridges form between Cys-11–Cys-70, Cys-26–Cys-117, Cys-28–Cys-44, Cys-43–Cys-98, Cys-50–Cys-91, Cys-59–Cys-84, and Cys-77–Cys-89. Positions 27, 29, and 31 each coordinate Ca(2+). Residue His-47 is part of the active site. Asp-48 is a binding site for Ca(2+). The Coagulation factor Xa binding motif signature appears at Glu-52–Lys-69. Residue Asp-92 is part of the active site.

Belongs to the phospholipase A2 family. Group I subfamily. D49 sub-subfamily. Requires Ca(2+) as cofactor. Expressed by the venom gland.

The protein resides in the secreted. It carries out the reaction a 1,2-diacyl-sn-glycero-3-phosphocholine + H2O = a 1-acyl-sn-glycero-3-phosphocholine + a fatty acid + H(+). In terms of biological role, snake venom phospholipase A2 (PLA2) that shows anticoagulant activity, has cytotoxic activity and affects neuromuscular transmission in vitro. PLA2 catalyzes the calcium-dependent hydrolysis of the 2-acyl groups in 3-sn-phosphoglycerides. The protein is Basic phospholipase A2 nigexine of Naja pallida (Red spitting cobra).